The following is a 964-amino-acid chain: Vitamin B12-dependent ribonucleotide reductase (964 aa).

A disordered region spans residues 1-21 (MTETASGPARGSRAKGTKAKG). Residues 12–21 (SRAKGTKAKG) are compositionally biased toward basic residues. Residues Ser142, 158-159 (AC), Gly187, 363-367 (NPCSE), and 553-557 (PTGTI) each bind substrate. An intrachain disulfide couples Cys159 to Cys376. Catalysis depends on Asn363, which acts as the Proton acceptor. The active-site Cysteine radical intermediate is the Cys365. Glu367 acts as the Proton acceptor in catalysis.

This sequence belongs to the ribonucleoside diphosphate reductase class-2 family. The cofactor is adenosylcob(III)alamin.

The catalysed reaction is a 2'-deoxyribonucleoside 5'-diphosphate + [thioredoxin]-disulfide + H2O = a ribonucleoside 5'-diphosphate + [thioredoxin]-dithiol. Catalyzes the reduction of ribonucleotides to deoxyribonucleotides. May function to provide a pool of deoxyribonucleotide precursors for DNA repair during oxygen limitation and/or for immediate growth after restoration of oxygen. This chain is Vitamin B12-dependent ribonucleotide reductase (nrdJ), found in Streptomyces avermitilis (strain ATCC 31267 / DSM 46492 / JCM 5070 / NBRC 14893 / NCIMB 12804 / NRRL 8165 / MA-4680).